We begin with the raw amino-acid sequence, 117 residues long: Protein OPG035 (117 aa).

This sequence belongs to the poxviridae OPG035 family.

In terms of biological role, bcl-2-like protein which contributes to virulence by preventing host NF-kappa-B activation in response to pro-inflammatory stimuli such as TNF-alpha or IL1B. The polypeptide is Protein OPG035 (OPG035) (Homo sapiens (Human)).